A 416-amino-acid chain; its full sequence is Phosphatidylserine decarboxylase proenzyme, mitochondrial (416 aa).

Topologically, residues 1 to 67 (MPGKSTRPLP…GRLHFPQLAL (67 aa)) are mitochondrial matrix. The helical transmembrane segment at 68–86 (RRRLGQLSCMSKPALKLRS) threads the bilayer. Topologically, residues 87–416 (WPLTVLYYLL…IRFGEALGSL (330 aa)) are mitochondrial intermembrane. Catalysis depends on charge relay system; for autoendoproteolytic cleavage activity residues D198, H274, and S385. The Schiff-base intermediate with substrate; via pyruvic acid; for decarboxylase activity role is filled by S385. The residue at position 385 (S385) is a Pyruvic acid (Ser); by autocatalysis.

Belongs to the phosphatidylserine decarboxylase family. PSD-B subfamily. Eukaryotic type I sub-subfamily. As to quaternary structure, heterodimer of a large membrane-associated beta subunit and a small pyruvoyl-containing alpha subunit. The cofactor is pyruvate. Is synthesized initially as an inactive proenzyme. Formation of the active enzyme involves a self-maturation process in which the active site pyruvoyl group is generated from an internal serine residue via an autocatalytic post-translational modification. Two non-identical subunits are generated from the proenzyme in this reaction, and the pyruvate is formed at the N-terminus of the alpha chain, which is derived from the carboxyl end of the proenzyme. The autoendoproteolytic cleavage occurs by a canonical serine protease mechanism, in which the side chain hydroxyl group of the serine supplies its oxygen atom to form the C-terminus of the beta chain, while the remainder of the serine residue undergoes an oxidative deamination to produce ammonia and the pyruvoyl prosthetic group on the alpha chain. During this reaction, the Ser that is part of the protease active site of the proenzyme becomes the pyruvoyl prosthetic group, which constitutes an essential element of the active site of the mature decarboxylase.

The protein resides in the mitochondrion inner membrane. The protein localises to the cytoplasm. It localises to the lipid droplet. It catalyses the reaction a 1,2-diacyl-sn-glycero-3-phospho-L-serine + H(+) = a 1,2-diacyl-sn-glycero-3-phosphoethanolamine + CO2. It functions in the pathway phospholipid metabolism; phosphatidylethanolamine biosynthesis. Catalyzes the formation of phosphatidylethanolamine (PtdEtn) from phosphatidylserine (PtdSer). Plays a central role in phospholipid metabolism and in the interorganelle trafficking of phosphatidylserine. May be involved in lipid droplet biogenesis at the endoplasmic reticulum membrane. The protein is Phosphatidylserine decarboxylase proenzyme, mitochondrial of Bos taurus (Bovine).